The following is a 110-amino-acid chain: Flagellar hook-basal body complex protein FliE (110 aa).

It belongs to the FliE family.

It localises to the bacterial flagellum basal body. The polypeptide is Flagellar hook-basal body complex protein FliE (Pseudomonas putida (strain GB-1)).